A 136-amino-acid chain; its full sequence is Autophagy-related protein 41 (136 aa).

The ATG9-binding stretch occupies residues 127–136 (QNYRLWLSSV).

Interacts with ATG9.

The protein localises to the preautophagosomal structure membrane. In terms of biological role, involved in both selective and non-selective autophagy. Does not appear to play a role in determining the size of autophagosomes, but rather influences their formation rate. With ATG9, plays a role in the delivery of donor membrane to expanding phagophore. The polypeptide is Autophagy-related protein 41 (Saccharomyces cerevisiae (strain ATCC 204508 / S288c) (Baker's yeast)).